Reading from the N-terminus, the 625-residue chain is Prothrombin (625 aa).

The first 24 residues, 1-24, serve as a signal peptide directing secretion; it reads MARVRGPRLPGCLALAALFSLVHS. A propeptide spanning residues 25-43 is cleaved from the precursor; it reads QHVFLAHQQASSLLQRARR. Residues 44–90 enclose the Gla domain; the sequence is ANKGFLEEVRKGNLERECLEEPCSREEAFEALESLSATDAFWAKYTA. 10 positions are modified to 4-carboxyglutamate: glutamate 50, glutamate 51, glutamate 58, glutamate 60, glutamate 63, glutamate 64, glutamate 69, glutamate 70, glutamate 73, and glutamate 76. A disulfide bridge links cysteine 61 with cysteine 66. 11 disulfides stabilise this stretch: cysteine 91–cysteine 104, cysteine 109–cysteine 187, cysteine 130–cysteine 170, cysteine 158–cysteine 182, cysteine 214–cysteine 292, cysteine 235–cysteine 275, cysteine 263–cysteine 287, cysteine 339–cysteine 485, cysteine 394–cysteine 410, cysteine 539–cysteine 553, and cysteine 567–cysteine 597. 2 Kringle domains span residues 109-187 and 214-292; these read CAEG…VPVC and CVPD…LNYC. Asparagine 120 and asparagine 144 each carry an N-linked (GlcNAc...) asparagine glycan. Residues 367–621 enclose the Peptidase S1 domain; sequence IVEGQDAEVG…LKKWIQKVID (255 aa). The Charge relay system role is filled by histidine 409. A glycan (N-linked (GlcNAc...) asparagine) is linked at asparagine 419. Catalysis depends on aspartate 465, which acts as the Charge relay system. Residues 554 to 576 are high affinity receptor-binding region which is also known as the TP508 peptide; that stretch reads AGYKPGEGKRGDACEGDSGGPFV. Residue serine 571 is the Charge relay system of the active site.

The protein belongs to the peptidase S1 family. As to quaternary structure, heterodimer (named alpha-thrombin) of a light and a heavy chain; disulfide-linked. Forms a heterodimer with SERPINA5. In plasma, interacts (via N-terminus) with alpha-1-microglobulin; this interaction does not prevent the activation of prothrombin to thrombin. Post-translationally, the gamma-carboxyglutamyl residues, which bind calcium ions, result from the carboxylation of glutamyl residues by a microsomal enzyme, the vitamin K-dependent carboxylase. The modified residues are necessary for the calcium-dependent interaction with a negatively charged phospholipid surface, which is essential for the conversion of prothrombin to thrombin. In the penultimate step of the coagulation cascade, prothrombin is converted to thrombin by the prothrombinase complex composed of factor Xa (F10), cofactor Va (F5), and phospholipids. This activation requires factor Xa-catalyzed sequential cleavage at 2 sites, Arg-317 and Arg-366, along 2 possible pathways. In the first pathway, the first cleavage occurs at Arg-317, leading to the formation of the inactive intermediate prethrombin-2. This pathway preferentially occurs on platelets and in the absence of cofactor Va. In the second pathway, the first cleavage occurs at Arg-366, which separates protease domain into 2 chains that remain connected through a disulfide bond and generates the active intermediate meizothrombin. The presence of cofactor Va directs activation along the meizothrombin pathway and greatly accelerates the rate of cleavage at Arg-366, but has a smaller effect on the cleavage of meizothrombin at Arg-317. Meizothrombin accumulates as an intermediate when prothrombinase is assembled on the membrane of red blood cells. In terms of tissue distribution, expressed by the liver and secreted in plasma.

The protein resides in the secreted. Its subcellular location is the extracellular space. It carries out the reaction Selective cleavage of Arg-|-Gly bonds in fibrinogen to form fibrin and release fibrinopeptides A and B.. With respect to regulation, activity is promoted in the presence of negatively charged surfaces, such as polyphosphate and dextran sulfate. Inhibited by SERPINA5. In terms of biological role, thrombin, which cleaves bonds after Arg and Lys, converts fibrinogen to fibrin and activates factors V, VII, VIII, XIII, and, in complex with thrombomodulin, protein C. Functions in blood homeostasis, inflammation and wound healing. Activates coagulation factor XI (F11); activation is promoted by the contact with negatively charged surfaces. Triggers the production of pro-inflammatory cytokines, such as MCP-1/CCL2 and IL8/CXCL8, in endothelial cells. The protein is Prothrombin (F2) of Bos taurus (Bovine).